A 487-amino-acid chain; its full sequence is Fibroblast growth factor receptor-like 1 (487 aa).

Residues 1-18 form the signal peptide; that stretch reads MGLQLALLLAGIVALSDS. At 19–371 the chain is on the extracellular side; sequence ARGPPRIADK…PSSVSSLPWP (353 aa). One can recognise an Ig-like C2-type 1 domain in the interval 23–109; it reads PRIADKVIHR…GSTNVNYTLI (87 aa). Cys-45 and Cys-93 are disulfide-bonded. Asn-105 carries N-linked (GlcNAc...) asparagine glycosylation. Residues 115–125 show a composition bias toward polar residues; the sequence is SSGKNSQTPEG. Residues 115 to 147 are disordered; sequence SSGKNSQTPEGSNGEYEDHSGKQWAQPRFTQPA. Ig-like C2-type domains follow at residues 141–231 and 240–348; these read PRFT…YKVE and PILT…AFLT. Cys-166 and Cys-215 are oxidised to a cystine. N-linked (GlcNAc...) asparagine glycosylation is found at Asn-225, Asn-249, and Asn-287. Cys-262 and Cys-332 form a disulfide bridge. The chain crosses the membrane as a helical span at residues 372-392; sequence VIIGIPAGAVFIFGTILLWLC. At 393–487 the chain is on the cytoplasmic side; sequence QTKKKPCSPP…HQHQHIQYQC (95 aa).

As to quaternary structure, interacts with heparin and FGF2. Expressed in cartilaginous structures.

The protein resides in the cell membrane. In terms of biological role, has a negative effect on cell proliferation. This Gallus gallus (Chicken) protein is Fibroblast growth factor receptor-like 1 (FGFRL1).